Here is a 117-residue protein sequence, read N- to C-terminus: Protein P16 (117 aa).

Residues 7–24 (LYWVGGGLVLILIWLWFR) form a helical membrane-spanning segment.

The protein resides in the virion membrane. In terms of biological role, protein of the infection vertex complex, which increases the vertex stability. Anchors the vertex structure to the viral membrane. Essential for viral infectivity. This chain is Protein P16 (XVI), found in Enterobacteria phage PRD1 (Bacteriophage PRD1).